The primary structure comprises 111 residues: Flagellar hook-basal body complex protein FliE (111 aa).

Belongs to the FliE family.

The protein localises to the bacterial flagellum basal body. This chain is Flagellar hook-basal body complex protein FliE, found in Sinorhizobium fredii (strain NBRC 101917 / NGR234).